A 622-amino-acid chain; its full sequence is Telomerase-associated protein of 75 kDa (622 aa).

Component of the telomerase holoenzyme complex, composed of the catalytic core (the catalytic subunit TERT, the telomerase RNA template component TER and TAP65/p65), which is associated with two heterotrimeric subcomplexes: (i) the replication protein A (RPA)-related subcomplex, composed of TEB1, RPA2/TEB2 and RPA3/TEB3 and (ii) the CST-like subcomplex, composed of TAP75/p75, TAP45/p45 and TAP19/p19. TEB1 and the CST-like subcomplex are tethered to the catalytic core by TAP50/p50.

It localises to the chromosome. The protein resides in the telomere. Its function is as follows. Component of a CST-like subcomplex of the holoenzyme telomerase ribonucleoprotein complex, which stimulates telomerase complementary-strand synthesis. Telomerase is an essential ribonucleoprotein enzyme that copies new telomeric repeats onto chromosome ends by repetitively synthesizing the short telomere-repeat sequence 5'-TTGGGG-3' using an RNA template component TER. The CST-like subcomplex (also named 7-4-1) binds telomeric single-stranded DNA and coordinates telomere G-strand and C-strand synthesis. The sequence is that of Telomerase-associated protein of 75 kDa from Tetrahymena thermophila (strain SB210).